A 268-amino-acid chain; its full sequence is MARTDRDRWDLATSVGATATMVAAQRALSSDANLIDDPYAAPLVRAVGIDVYVRLVDGEIQPGTSEFDPHRMAKGMACRTRFYDDFFLDAARAGVGQAVILASGLDARAYRLPWPAGTVVYEVDMPDVIEFKTLTLADLGAQPTAQRRTVAIDLRDDWAAALREERFDTQAPAAWSAEGLLVYLPEQAQDALFDNITALSAPGSRLAFDFVPDTAVFADPRWRAHHDRMSELGFEVDFNDLVYHGERSHIVDHLSGRGCSLVPLFRVG.

S-adenosyl-L-methionine is bound by residues D124 and 153–154; that span reads DL.

Belongs to the UPF0677 family.

Exhibits S-adenosyl-L-methionine-dependent methyltransferase activity. In Mycolicibacterium paratuberculosis (strain ATCC BAA-968 / K-10) (Mycobacterium paratuberculosis), this protein is Putative S-adenosyl-L-methionine-dependent methyltransferase MAP_0663.